Consider the following 85-residue polypeptide: Conotoxin Lv15a (85 aa).

The N-terminal stretch at 1 to 23 (MEKLTVLILVATVLLMIQVLAQS) is a signal peptide. Residues 24-49 (GGDKHLKRRPKQYATKRLSALMRGHR) constitute a propeptide that is removed on maturation. Gln50 is modified (pyrrolidone carboxylic acid).

The protein belongs to the conotoxin O2 superfamily. In terms of processing, contains 4 disulfide bonds. Expressed by the venom duct.

It localises to the secreted. This chain is Conotoxin Lv15a, found in Conus lividus (Livid cone).